We begin with the raw amino-acid sequence, 175 residues long: MEHVVIVDPEGQRVGTEEKIRAHADGGTLHLAFCVFVFNPRGELLLQRRADSKYHFSGLWSNTCCGHPRPGEGVTEAAERRLGEEFGFVTRLHPVAQFTYHAEDHHTGLAEYEYAHVLIGRAPTDQPAPDPLEIGAWEWAAPLRIQADTQQYPLRYTPWFRRLIQEQPVADWATG.

2 residues coordinate Mn(2+): His23 and His30. The region spanning 28–162 is the Nudix hydrolase domain; it reads TLHLAFCVFV…PLRYTPWFRR (135 aa). Cys65 is an active-site residue. His67 serves as a coordination point for Mn(2+). Residue Glu85 coordinates Mg(2+). Mn(2+) is bound by residues Glu111 and Glu113. Glu113 is a catalytic residue.

It belongs to the IPP isomerase type 1 family. Mg(2+) is required as a cofactor. Requires Mn(2+) as cofactor.

It is found in the cytoplasm. It carries out the reaction isopentenyl diphosphate = dimethylallyl diphosphate. Its pathway is isoprenoid biosynthesis; dimethylallyl diphosphate biosynthesis; dimethylallyl diphosphate from isopentenyl diphosphate: step 1/1. Its function is as follows. Catalyzes the 1,3-allylic rearrangement of the homoallylic substrate isopentenyl (IPP) to its highly electrophilic allylic isomer, dimethylallyl diphosphate (DMAPP). The sequence is that of Isopentenyl-diphosphate Delta-isomerase from Halorhodospira halophila (strain DSM 244 / SL1) (Ectothiorhodospira halophila (strain DSM 244 / SL1)).